Consider the following 526-residue polypeptide: Glucose-6-phosphate isomerase (526 aa).

Glu-347 acts as the Proton donor in catalysis. Catalysis depends on residues His-378 and Lys-493.

This sequence belongs to the GPI family.

The protein resides in the cytoplasm. The enzyme catalyses alpha-D-glucose 6-phosphate = beta-D-fructose 6-phosphate. Its pathway is carbohydrate biosynthesis; gluconeogenesis. It participates in carbohydrate degradation; glycolysis; D-glyceraldehyde 3-phosphate and glycerone phosphate from D-glucose: step 2/4. Catalyzes the reversible isomerization of glucose-6-phosphate to fructose-6-phosphate. This Chlamydia pneumoniae (Chlamydophila pneumoniae) protein is Glucose-6-phosphate isomerase.